The sequence spans 424 residues: Glutamate-1-semialdehyde 2,1-aminomutase (424 aa).

Lysine 266 is subject to N6-(pyridoxal phosphate)lysine.

It belongs to the class-III pyridoxal-phosphate-dependent aminotransferase family. HemL subfamily. Homodimer. The cofactor is pyridoxal 5'-phosphate.

It is found in the cytoplasm. It catalyses the reaction (S)-4-amino-5-oxopentanoate = 5-aminolevulinate. It functions in the pathway porphyrin-containing compound metabolism; protoporphyrin-IX biosynthesis; 5-aminolevulinate from L-glutamyl-tRNA(Glu): step 2/2. The sequence is that of Glutamate-1-semialdehyde 2,1-aminomutase from Azoarcus sp. (strain BH72).